Consider the following 298-residue polypeptide: uncharacterized protein (298 aa).

9 helical membrane-spanning segments follow: residues 10-30 (VIYT…WKLL), 36-56 (LDIL…VLFF), 76-96 (ILSL…YIWA), 101-121 (FLLE…LLGI), 142-162 (GVII…LLAF), 179-199 (AIGL…YLLF), 212-232 (GTWL…LLFA), 243-263 (VGIL…FVYH), and 271-291 (AFTF…QVKW). 2 EamA domains span residues 17–148 (FIMW…ISAF) and 162–286 (FSFG…LFTF).

This sequence belongs to the EamA transporter family.

It is found in the cell membrane. This is an uncharacterized protein from Bacillus subtilis (strain 168).